A 431-amino-acid chain; its full sequence is 3-phosphoshikimate 1-carboxyvinyltransferase (431 aa).

3-phosphoshikimate is bound by residues Lys-21, Ser-22, and Arg-26. A phosphoenolpyruvate-binding site is contributed by Lys-21. Phosphoenolpyruvate is bound by residues Gly-93 and Arg-121. 4 residues coordinate 3-phosphoshikimate: Ser-166, Gln-168, Asp-318, and Lys-345. Position 168 (Gln-168) interacts with phosphoenolpyruvate. Asp-318 functions as the Proton acceptor in the catalytic mechanism. Phosphoenolpyruvate-binding residues include Arg-349 and Arg-391.

Belongs to the EPSP synthase family. Monomer.

It localises to the cytoplasm. The catalysed reaction is 3-phosphoshikimate + phosphoenolpyruvate = 5-O-(1-carboxyvinyl)-3-phosphoshikimate + phosphate. It functions in the pathway metabolic intermediate biosynthesis; chorismate biosynthesis; chorismate from D-erythrose 4-phosphate and phosphoenolpyruvate: step 6/7. Functionally, catalyzes the transfer of the enolpyruvyl moiety of phosphoenolpyruvate (PEP) to the 5-hydroxyl of shikimate-3-phosphate (S3P) to produce enolpyruvyl shikimate-3-phosphate and inorganic phosphate. In Sulfurihydrogenibium sp. (strain YO3AOP1), this protein is 3-phosphoshikimate 1-carboxyvinyltransferase.